A 39-amino-acid chain; its full sequence is Photosystem II reaction center protein J (39 aa).

Residues 7-27 (IPLWLIGTIVGILVIGLIGIY) traverse the membrane as a helical segment.

The protein belongs to the PsbJ family. As to quaternary structure, PSII is composed of 1 copy each of membrane proteins PsbA, PsbB, PsbC, PsbD, PsbE, PsbF, PsbH, PsbI, PsbJ, PsbK, PsbL, PsbM, PsbT, PsbX, PsbY, PsbZ, Psb30/Ycf12, at least 3 peripheral proteins of the oxygen-evolving complex and a large number of cofactors. It forms dimeric complexes.

The protein resides in the plastid. It localises to the chloroplast thylakoid membrane. Its function is as follows. One of the components of the core complex of photosystem II (PSII). PSII is a light-driven water:plastoquinone oxidoreductase that uses light energy to abstract electrons from H(2)O, generating O(2) and a proton gradient subsequently used for ATP formation. It consists of a core antenna complex that captures photons, and an electron transfer chain that converts photonic excitation into a charge separation. The protein is Photosystem II reaction center protein J of Welwitschia mirabilis (Tree tumbo).